Here is a 197-residue protein sequence, read N- to C-terminus: MSSAPAPGSAPVCLTLWDEEDFQGRRCRLLSDCANVCERGALRRVRSVKVENGAWVAFEYPDFQGQQFILEKGDYPCWSAWSGSSGHHSNQLLSFRPVLCANHSDSRVTLFEGENFQGCKFELSDDYPSLPSMGWTSKDVGSLKVSSGAWVAYQYPGYRGYQYVLERDRHSGEFRTYSDFGTQAHTGQLQSIRRVQH.

The segment at 1 to 11 is N-terminal arm; that stretch reads MSSAPAPGSAP. Beta/gamma crystallin 'Greek key' domains lie at 12 to 52 and 53 to 99; these read VCLT…KVEN and GAWV…RPVL. Residues 100–105 form a connecting peptide region; sequence CANHSD. Beta/gamma crystallin 'Greek key' domains follow at residues 106-147 and 148-196; these read SRVT…KVSS and GAWV…RRVQ.

It belongs to the beta/gamma-crystallin family. In terms of assembly, homo/heterodimer, or complexes of higher-order. The structure of beta-crystallin oligomers seems to be stabilized through interactions between the N-terminal arms.

Functionally, crystallins are the dominant structural components of the vertebrate eye lens. The polypeptide is Beta-crystallin A2 (Cryba2) (Mus musculus (Mouse)).